We begin with the raw amino-acid sequence, 284 residues long: MKRNPVVAGMFYPAEYHELLEMIEYCYLSPRGPKELPSKRGNYTKPLGIVSPHAGYIYSGPVAAHGYKKISENINGEVTAIILGPNHTGLGSGISTMKGIWKTPFGDMEIDNEFADRLWKECDVLDLDENSHLREHSIEVQLPFLKHLEDLNIAKFKFVPICMMMQDYETSMDVGYFIAKVAKEMNRKIIIIASTDFSHYESQESASKKDALVIKDILELKDEEIFTDVVTHNISMCGYGPVIAMIKAMKDLGAKNSNLLYYSTSGDVTKDYSEVVGYASILVK.

The protein belongs to the MEMO1 family.

The sequence is that of MEMO1 family protein MmarC5_0191 from Methanococcus maripaludis (strain C5 / ATCC BAA-1333).